The chain runs to 1357 residues: DNA-directed RNA polymerase subunit beta (1357 aa).

It belongs to the RNA polymerase beta chain family. The RNAP catalytic core consists of 2 alpha, 1 beta, 1 beta' and 1 omega subunit. When a sigma factor is associated with the core the holoenzyme is formed, which can initiate transcription.

It carries out the reaction RNA(n) + a ribonucleoside 5'-triphosphate = RNA(n+1) + diphosphate. Functionally, DNA-dependent RNA polymerase catalyzes the transcription of DNA into RNA using the four ribonucleoside triphosphates as substrates. This chain is DNA-directed RNA polymerase subunit beta, found in Pseudomonas paraeruginosa (strain DSM 24068 / PA7) (Pseudomonas aeruginosa (strain PA7)).